A 130-amino-acid polypeptide reads, in one-letter code: uncharacterized protein (130 aa).

Residues Met-1–Val-28 are disordered. Positions Gln-17–Val-28 are enriched in polar residues.

This is an uncharacterized protein from Saccharomyces cerevisiae (strain ATCC 204508 / S288c) (Baker's yeast).